The following is a 374-amino-acid chain: Heptahelical transmembrane protein 5 (374 aa).

The Cytoplasmic segment spans residues 1–79; it reads MGDEAEIKEH…LSIFTIHNET (79 aa). A helical membrane pass occupies residues 80-100; that stretch reads LNVWTHLIGFFLFLALTIYTA. Over 101–191 the chain is Extracellular; it reads TKVPSVVDLH…LIFRPITRWP (91 aa). A helical transmembrane segment spans residues 192-212; sequence FYAFLGGAIFCLLASSTCHLL. At 213 to 228 the chain is on the cytoplasmic side; it reads SCHSERVSYIMLRLDY. A helical membrane pass occupies residues 229–249; the sequence is AGIAALIATSFYPPVYYSFMC. Residues 250-256 lie on the Extracellular side of the membrane; it reads DPFFCNL. The helical transmembrane segment at 257-277 threads the bilayer; the sequence is YLGFITILGIATVLVSLLPVF. Residues 278–288 are Cytoplasmic-facing; it reads QSLEFRVVRAS. Residues 289–309 form a helical membrane-spanning segment; that stretch reads LFFGMGFSGLAPILHKLIIFW. At 310-313 the chain is on the extracellular side; sequence DQPE. A helical membrane pass occupies residues 314–334; the sequence is ALHMTGYEILMGLLYGLGAVV. The Cytoplasmic portion of the chain corresponds to 335-347; the sequence is YATRIPERWMPGK. Residues 348 to 368 form a helical membrane-spanning segment; that stretch reads FDIAGHSHQLFHVLVVAGALT. The Extracellular portion of the chain corresponds to 369–374; it reads HYRAGL.

This sequence belongs to the ADIPOR family. Expressed in roots, leaves, stems and flowers.

The protein localises to the membrane. Functionally, may play a role in abiotic stress response. The sequence is that of Heptahelical transmembrane protein 5 (HHP5) from Arabidopsis thaliana (Mouse-ear cress).